Reading from the N-terminus, the 122-residue chain is uncharacterized protein (122 aa).

Thr-55 bears the Phosphothreonine mark. A phosphoserine mark is found at Ser-72, Ser-86, Ser-96, Ser-112, and Ser-118.

The protein resides in the cytoplasm. This is an uncharacterized protein from Homo sapiens (Human).